A 208-amino-acid chain; its full sequence is 28 kDa heat- and acid-stable phosphoprotein homolog (208 aa).

2 disordered regions span residues 1 to 133 (MAGG…VTKK) and 145 to 208 (LSRR…LGLA). Positions 16–44 (FGRDYERSKGKISRDRVYDEEDIIKRNQE) are enriched in basic and acidic residues. 2 stretches are compositionally biased toward low complexity: residues 52–69 (GSESGSENETKNNNNKSK) and 84–100 (RNPNAKKPAAKRPPTTK). Acidic residues predominate over residues 105–121 (SDSEDDSDKESDSEDEI). Residues 137-206 (INVNAKVELS…EKMAERRRLG (70 aa)) adopt a coiled-coil conformation. Composition is skewed to basic and acidic residues over residues 145 to 154 (LSRREKEELA) and 162 to 208 (QNEK…LGLA).

It belongs to the PDAP1 family.

The polypeptide is 28 kDa heat- and acid-stable phosphoprotein homolog (Dictyostelium discoideum (Social amoeba)).